The following is a 1108-amino-acid chain: DNA-directed RNA polymerase subunit beta (1108 aa).

The protein belongs to the RNA polymerase beta chain family. In plastids the minimal PEP RNA polymerase catalytic core is composed of four subunits: alpha, beta, beta', and beta''. When a (nuclear-encoded) sigma factor is associated with the core the holoenzyme is formed, which can initiate transcription.

It localises to the plastid. The protein localises to the chloroplast. The catalysed reaction is RNA(n) + a ribonucleoside 5'-triphosphate = RNA(n+1) + diphosphate. Its function is as follows. DNA-dependent RNA polymerase catalyzes the transcription of DNA into RNA using the four ribonucleoside triphosphates as substrates. The chain is DNA-directed RNA polymerase subunit beta from Gnetum parvifolium (Small-leaved jointfir).